Here is a 700-residue protein sequence, read N- to C-terminus: pH-response regulator protein palI/prr-5 (700 aa).

Over 1-8 (MLRPATPL) the chain is Cytoplasmic. Residues 9 to 29 (AVLLFAAFGLLTLATISTPII) traverse the membrane as a helical segment. Residues 30–90 (KQIPLSSFEI…PRATRSTLSS (61 aa)) are Extracellular-facing. A helical membrane pass occupies residues 91–111 (ILIVHPVAALITLINFVLAIV). The Cytoplasmic segment spans residues 112 to 123 (AHFHSPSHSARY). Residues 124 to 144 (LLILFIVSFVDFIVCLLCFLV) form a helical membrane-spanning segment. The Extracellular segment spans residues 145-152 (DVLLFIPH). A helical transmembrane segment spans residues 153–173 (LSWGSYIVVAATILVAFCGLV). Residues 174–700 (TCAMRRTLVN…GNMPRAAGPR (527 aa)) lie on the Cytoplasmic side of the membrane. Disordered regions lie at residues 226–491 (SGAN…GIRD), 507–560 (VPDP…PISE), and 573–700 (DVDP…AGPR). Residues 234–252 (KLPEFTTFEKKDDRSEERI) show a composition bias toward basic and acidic residues. Residues 320–378 (GRGGMPPGGYRGRGGFPGPGRGGGPPQNGRGGYGPPGRGRGGYGPPPRGYGGPGPRGGR) show a composition bias toward gly residues. A compositionally biased stretch (polar residues) spans 414-424 (SPYANRQQSPG). Polar residues-rich tracts occupy residues 593–603 (SMQSPPASNSY) and 615–637 (ESENSNFTSISQRGINPRWNSAN). The segment covering 657 to 671 (VVPRRPVNRPGAGPA) has biased composition (low complexity).

The protein belongs to the palI/RIM9 family.

It is found in the cell membrane. Its function is as follows. Required for the proteolytic cleavage of the transcription factor pacc-1 in response to alkaline ambient pH. This is pH-response regulator protein palI/prr-5 (prr-5) from Neurospora crassa (strain ATCC 24698 / 74-OR23-1A / CBS 708.71 / DSM 1257 / FGSC 987).